A 432-amino-acid polypeptide reads, in one-letter code: MRKIKRLNSSLAEFRREFDELLLRGNVDMDTVIPVVSGLIKEIRTQGDAALLAHVAKFDRWNPKSAMELKIDPSLMKRAYEGLEASLREALHSAYNRIHSFHSKQKPQSWLDFEENGTILGQKVTPMDRAGLYIPGGKAAYPSSLLMNAIPAIVAGVKEIVVCTPTPENEPNELLLAACHLCGIKEVYKVGGASAIAAMAYGTESLGRVDVITGPGNIYVATAKKLVFGQVNIDMVAGPSEIGILADESAKAPWVALDLLSQAEHDEMASSILVTPSVELADAVDVEVERALERLDRKEISSKSIYTRGAIIIAKDMNEAVSLMNEIAPEHLEVLVENPFGWLPEIRHAGAIFLGENTPEPIGDYIAGPNHTLPTGGTARFYSPLSTEHFMKKSSILSFSERGIRELGHHCAKLAQTEGLDAHKESVLARLV.

Substrate is bound by residues serine 240, glutamine 262, and histidine 265. Zn(2+) is bound by residues glutamine 262 and histidine 265. Residues glutamate 330 and histidine 331 each act as proton acceptor in the active site. Residues histidine 331, aspartate 364, glutamate 418, and histidine 423 each coordinate substrate. Residue aspartate 364 coordinates Zn(2+). Histidine 423 contributes to the Zn(2+) binding site.

Belongs to the histidinol dehydrogenase family. Zn(2+) serves as cofactor.

It carries out the reaction L-histidinol + 2 NAD(+) + H2O = L-histidine + 2 NADH + 3 H(+). It participates in amino-acid biosynthesis; L-histidine biosynthesis; L-histidine from 5-phospho-alpha-D-ribose 1-diphosphate: step 9/9. Its function is as follows. Catalyzes the sequential NAD-dependent oxidations of L-histidinol to L-histidinaldehyde and then to L-histidine. The polypeptide is Histidinol dehydrogenase (Wolinella succinogenes (strain ATCC 29543 / DSM 1740 / CCUG 13145 / JCM 31913 / LMG 7466 / NCTC 11488 / FDC 602W) (Vibrio succinogenes)).